The sequence spans 216 residues: Fucoxanthin-chlorophyll a-c binding protein C, chloroplastic (216 aa).

A chloroplast-targeting transit peptide spans 1–38 (MKSAIMAVASAAPGLRGPSAFNGAALTTSAKSSSAMKM). Helical transmembrane passes span 80-100 (IAML…PGML), 121-141 (IPPG…LAVM), and 182-202 (GRAA…NNKP).

This sequence belongs to the fucoxanthin chlorophyll protein family. The LHC complex of chromophytic algae is composed of fucoxanthin, chlorophyll A and C bound non-covalently by fucoxanthin chlorophyll proteins (FCPs). The ratio of pigments in this LHC is; fucoxanthin: chlorophyll C: chlorophyll A; (0.6-1): (0.1-0.3): (1).

It is found in the plastid. Its subcellular location is the chloroplast thylakoid membrane. The light-harvesting complex (LHC) functions as a light receptor, it captures and delivers excitation energy to photosystems with which it is closely associated. Energy is transferred from the carotenoid and chlorophyll C (or B) to chlorophyll A and the photosynthetic reaction centers where it is used to synthesize ATP and reducing power. This Macrocystis pyrifera (Giant kelp) protein is Fucoxanthin-chlorophyll a-c binding protein C, chloroplastic (FCPC).